We begin with the raw amino-acid sequence, 456 residues long: Protein trichome birefringence-like 25 (456 aa).

The chain crosses the membrane as a helical; Signal-anchor for type II membrane protein span at residues 26 to 42 (QIFLKSVAFFLLIGLAY). Positions 172–174 (GDS) match the GDS motif motif. The short motif at 426–440 (DCLHWCLPGPIDSWN) is the DCXHWCLPGXXDXWN motif element.

This sequence belongs to the PC-esterase family. TBL subfamily.

The protein resides in the membrane. Functionally, may be involved in the O-acetylation of mannan. May act as a bridging protein that binds pectin and other cell wall polysaccharides. Probably involved in maintaining esterification of pectins. This chain is Protein trichome birefringence-like 25 (TBL25), found in Arabidopsis thaliana (Mouse-ear cress).